The sequence spans 1165 residues: uncharacterized protein (1165 aa).

Residues 422-442 (EAAPPRPPRKSKAPEPTGDKA) are disordered.

This is an uncharacterized protein from Frog virus 3 (isolate Goorha) (FV-3).